The chain runs to 87 residues: Pro-gurmarin (87 aa).

The N-terminal stretch at 1-20 is a signal peptide; the sequence is MAKFAAIVLLILVASATVNA. The propeptide occupies 21–52; it reads VKEHDELPTTGMSRKILLQPVFKSLIISIAEG. Gln53 carries the post-translational modification Pyrrolidone carboxylic acid. 3 disulfides stabilise this stretch: Cys55/Cys70, Cys62/Cys75, and Cys69/Cys85.

As to expression, expressed in leaves (at protein level).

Functionally, peptide that strongly, but reversibly, suppresses the sweet taste-response to various sweeteners, including sugars, sweet amino acids and the artificial sweetener saccharin. In rodents, potentially binds to a sweet taste receptor present on apical microvilli of a subset of taste bud cells. Highly effective at blocking the sweet taste-response in rodents such as rats and mice, though mice may possess a mix of gurmarin-sensitive and -insensitive receptors. Has almost no effect on the sweet taste-response in humans. Inhibits Staphylococcus aureus biofilm formation without affecting bacterial viability. May be one of at least 9 different disulfide-rich peptides produced with varying properties. The sequence is that of Pro-gurmarin from Gymnema sylvestre (Gurmar).